Here is a 375-residue protein sequence, read N- to C-terminus: G-protein coupled estrogen receptor 1 (375 aa).

M1 is subject to N-acetylmethionine. The Extracellular segment spans residues 1 to 62 (MDVTSQARGV…QQYVIGLFLS (62 aa)). N25, N32, and N44 each carry an N-linked (GlcNAc...) asparagine glycan. Residues 63-84 (CLYTIFLFPIGFVGNILILVVN) traverse the membrane as a helical segment. At 85–96 (ISFREKMTIPDL) the chain is on the cytoplasmic side. Residues 97–120 (YFINLAVADLILVADSLIEVFNLH) traverse the membrane as a helical segment. Residues 121-132 (ERYYDIAVLCTF) lie on the Extracellular side of the membrane. C130 and C207 are oxidised to a cystine. A helical membrane pass occupies residues 133 to 153 (MSLFLQVNMYSSVFFLTWMSF). The Cytoplasmic segment spans residues 154-175 (DRYIALARAMRCSLFRTKHHAR). The helical transmembrane segment at 176 to 194 (LSCGLIWMASVSATLVPFT) threads the bilayer. Residues 195-220 (AVHLQHTDEACFCFADVREVQWLEVT) are Extracellular-facing. Residues 221–236 (LGFIVPFAIIGLCYSL) form a helical membrane-spanning segment. The Cytoplasmic portion of the chain corresponds to 237 to 259 (IVRVLVRAHRHRGLRPRRQKALR). A helical membrane pass occupies residues 260 to 280 (MILAVVLVFFVCWLPENVFIS). Residues 281-306 (VHLLQRTQPGAAPCKQSFRHAHPLTG) lie on the Extracellular side of the membrane. The chain crosses the membrane as a helical span at residues 307–327 (HIVNLAAFSNSCLNPLIYSFL). Residues 328-375 (GETFRDKLRLYIEQKTNLPALNRFCHAALKAVIPDSTEQSDVRFSSAV) are Cytoplasmic-facing.

It belongs to the G-protein coupled receptor 1 family. In terms of assembly, homodimer. Heterodimer; heterodimerizes with other G-protein-coupled receptor (GPCRs) like CRHR1, HTR1A and PAQR8. Interacts (via C-terminus tail motif) with DLG4 (via N-terminus tandem pair of PDZ domains); the interaction is direct and induces the increase of GPER1 protein levels residing at the plasma membrane surface in a estradiol-independent manner. Interacts with RAMP3; the interaction confers proper subcellular localization and function in cardioprotection. Interacts with KRT7 and KRT8. Interacts with EGFR; the interaction increases after agonist-induced stimulation in cancer-associated fibroblasts (CAF). Interacts with EGFR and ESR1. In terms of processing, ubiquitinated; ubiquitination occurs at the plasma membrane and leads to proteasome-mediated degradation. Post-translationally, glycosylated. Expressed in placenta, endothelial and epithelial cells, non laboring and laboring term myometrium, fibroblasts and cancer-associated fibroblasts (CAF), prostate cancer cells and invasive adenocarcinoma (at protein level). Ubiquitously expressed, but is most abundant in placenta. In brain regions, expressed as a 2.8 kb transcript in basal forebrain, frontal cortex, thalamus, hippocampus, caudate and putamen.

It localises to the nucleus. It is found in the cytoplasm. Its subcellular location is the perinuclear region. The protein localises to the cytoskeleton. The protein resides in the cell membrane. It localises to the basolateral cell membrane. It is found in the cytoplasmic vesicle membrane. Its subcellular location is the early endosome. The protein localises to the recycling endosome. The protein resides in the golgi apparatus membrane. It localises to the golgi apparatus. It is found in the trans-Golgi network. Its subcellular location is the endoplasmic reticulum membrane. The protein localises to the cell projection. The protein resides in the dendrite. It localises to the dendritic spine membrane. It is found in the axon. Its subcellular location is the postsynaptic density. The protein localises to the mitochondrion membrane. G-protein coupled estrogen receptor that binds to 17-beta-estradiol (E2) with high affinity, leading to rapid and transient activation of numerous intracellular signaling pathways. Stimulates cAMP production, calcium mobilization and tyrosine kinase Src inducing the release of heparin-bound epidermal growth factor (HB-EGF) and subsequent transactivation of the epidermal growth factor receptor (EGFR), activating downstream signaling pathways such as PI3K/Akt and ERK/MAPK. Mediates pleiotropic functions among others in the cardiovascular, endocrine, reproductive, immune and central nervous systems. Has a role in cardioprotection by reducing cardiac hypertrophy and perivascular fibrosis in a RAMP3-dependent manner. Regulates arterial blood pressure by stimulating vasodilation and reducing vascular smooth muscle and microvascular endothelial cell proliferation. Plays a role in blood glucose homeostasis contributing to the insulin secretion response by pancreatic beta cells. Triggers mitochondrial apoptosis during pachytene spermatocyte differentiation. Stimulates uterine epithelial cell proliferation. Enhances uterine contractility in response to oxytocin. Contributes to thymic atrophy by inducing apoptosis. Attenuates TNF-mediated endothelial expression of leukocyte adhesion molecules. Promotes neuritogenesis in developing hippocampal neurons. Plays a role in acute neuroprotection against NMDA-induced excitotoxic neuronal death. Increases firing activity and intracellular calcium oscillations in luteinizing hormone-releasing hormone (LHRH) neurons. Inhibits early osteoblast proliferation at growth plate during skeletal development. Inhibits mature adipocyte differentiation and lipid accumulation. Involved in the recruitment of beta-arrestin 2 ARRB2 at the plasma membrane in epithelial cells. Also functions as a receptor for aldosterone mediating rapid regulation of vascular contractibility through the PI3K/ERK signaling pathway. Involved in cancer progression regulation. Stimulates cancer-associated fibroblast (CAF) proliferation by a rapid genomic response through the EGFR/ERK transduction pathway. Associated with EGFR, may act as a transcription factor activating growth regulatory genes (c-fos, cyclin D1). Promotes integrin alpha-5/beta-1 and fibronectin (FN) matrix assembly in breast cancer cells. The chain is G-protein coupled estrogen receptor 1 from Homo sapiens (Human).